An 88-amino-acid chain; its full sequence is Small ribosomal subunit protein bS18A (88 aa).

The protein belongs to the bacterial ribosomal protein bS18 family. In terms of assembly, part of the 30S ribosomal subunit. Forms a tight heterodimer with protein bS6.

In terms of biological role, binds as a heterodimer with protein bS6 to the central domain of the 16S rRNA, where it helps stabilize the platform of the 30S subunit. The polypeptide is Small ribosomal subunit protein bS18A (Mycolicibacterium gilvum (strain PYR-GCK) (Mycobacterium gilvum (strain PYR-GCK))).